The following is a 1387-amino-acid chain: DNA-directed RNA polymerase subunit beta'' (1387 aa).

4 residues coordinate Zn(2+): Cys224, Cys295, Cys302, and Cys305. Residues 883–903 (SHTGKRNDPAGSGLIPDNGSD) are disordered.

This sequence belongs to the RNA polymerase beta' chain family. RpoC2 subfamily. As to quaternary structure, in plastids the minimal PEP RNA polymerase catalytic core is composed of four subunits: alpha, beta, beta', and beta''. When a (nuclear-encoded) sigma factor is associated with the core the holoenzyme is formed, which can initiate transcription. It depends on Zn(2+) as a cofactor.

The protein resides in the plastid. It is found in the chloroplast. The catalysed reaction is RNA(n) + a ribonucleoside 5'-triphosphate = RNA(n+1) + diphosphate. In terms of biological role, DNA-dependent RNA polymerase catalyzes the transcription of DNA into RNA using the four ribonucleoside triphosphates as substrates. The polypeptide is DNA-directed RNA polymerase subunit beta'' (Platanus occidentalis (Sycamore)).